The chain runs to 365 residues: Methylthioribose-1-phosphate isomerase (365 aa).

Catalysis depends on aspartate 255, which acts as the Proton donor.

The protein belongs to the eIF-2B alpha/beta/delta subunits family. MtnA subfamily.

Its subcellular location is the cytoplasm. It is found in the nucleus. The catalysed reaction is 5-(methylsulfanyl)-alpha-D-ribose 1-phosphate = 5-(methylsulfanyl)-D-ribulose 1-phosphate. It participates in amino-acid biosynthesis; L-methionine biosynthesis via salvage pathway; L-methionine from S-methyl-5-thio-alpha-D-ribose 1-phosphate: step 1/6. Catalyzes the interconversion of methylthioribose-1-phosphate (MTR-1-P) into methylthioribulose-1-phosphate (MTRu-1-P). The sequence is that of Methylthioribose-1-phosphate isomerase from Drosophila willistoni (Fruit fly).